A 304-amino-acid chain; its full sequence is Solute carrier family 25 member 34 (304 aa).

3 Solcar repeats span residues 4–97 (VPPA…ACQA), 101–194 (QQPG…AKAW), and 204–295 (DSWL…LRKL). 6 consecutive transmembrane segments (helical) span residues 7–27 (AVDL…TNPL), 45–65 (TYPR…RADG), 98–120 (GLSQ…GAFV), 170–191 (VGGA…FASA), 206–226 (WLVA…VMTP), and 278–301 (LGPH…WGQH).

It belongs to the mitochondrial carrier (TC 2.A.29) family.

The protein resides in the mitochondrion inner membrane. It carries out the reaction a dicarboxylate(in) + sulfate(out) = a dicarboxylate(out) + sulfate(in). In terms of biological role, putative antiporter that exchanges dicarboxylates and sulfur oxoanions across the inner membrane of mitochondria. This Bos taurus (Bovine) protein is Solute carrier family 25 member 34 (SLC25A34).